Reading from the N-terminus, the 272-residue chain is 3-methyl-2-oxobutanoate hydroxymethyltransferase (272 aa).

The Mg(2+) site is built by D42 and D86. 3-methyl-2-oxobutanoate is bound by residues 42–43 (DS), D86, and K116. E118 serves as a coordination point for Mg(2+). E185 functions as the Proton acceptor in the catalytic mechanism.

The protein belongs to the PanB family. In terms of assembly, homodecamer; pentamer of dimers. It depends on Mg(2+) as a cofactor.

It localises to the cytoplasm. It catalyses the reaction 3-methyl-2-oxobutanoate + (6R)-5,10-methylene-5,6,7,8-tetrahydrofolate + H2O = 2-dehydropantoate + (6S)-5,6,7,8-tetrahydrofolate. It participates in cofactor biosynthesis; (R)-pantothenate biosynthesis; (R)-pantoate from 3-methyl-2-oxobutanoate: step 1/2. Catalyzes the reversible reaction in which hydroxymethyl group from 5,10-methylenetetrahydrofolate is transferred onto alpha-ketoisovalerate to form ketopantoate. This chain is 3-methyl-2-oxobutanoate hydroxymethyltransferase, found in Prochlorococcus marinus (strain MIT 9303).